We begin with the raw amino-acid sequence, 298 residues long: Glutamyl-Q tRNA(Asp) synthetase (298 aa).

Residues 9 to 13 and glutamate 45 each bind L-glutamate; that span reads RFAPS. The 'HIGH' region signature appears at 12 to 22; the sequence is PSPSGELHFGS. Cysteine 101, cysteine 103, tyrosine 115, and cysteine 119 together coordinate Zn(2+). 2 residues coordinate L-glutamate: tyrosine 172 and arginine 190. Positions 228-232 match the 'KMSKS' region motif; that stretch reads KLSKQ. Lysine 231 lines the ATP pocket.

It belongs to the class-I aminoacyl-tRNA synthetase family. GluQ subfamily. Zn(2+) serves as cofactor.

Catalyzes the tRNA-independent activation of glutamate in presence of ATP and the subsequent transfer of glutamate onto a tRNA(Asp). Glutamate is transferred on the 2-amino-5-(4,5-dihydroxy-2-cyclopenten-1-yl) moiety of the queuosine in the wobble position of the QUC anticodon. This chain is Glutamyl-Q tRNA(Asp) synthetase, found in Cronobacter sakazakii (strain ATCC BAA-894) (Enterobacter sakazakii).